Here is a 616-residue protein sequence, read N- to C-terminus: Hemagglutinin-neuraminidase (616 aa).

The Intravirion portion of the chain corresponds to 1–26; that stretch reads MDRAVSQVALENDEREAKNTWRLVFR. The chain crosses the membrane as a helical span at residues 27-47; that stretch reads IAILLLTVVTLAISAAALAYS. Residues 48–616 are Virion surface-facing; it reads MEASTPSDLV…ELESYAASWP (569 aa). The N-linked (GlcNAc...) asparagine; by host glycan is linked to N119. Residues 124–152 form an important for interaction with fusion/F protein region; that stretch reads GAPIHDPDYIGGIGKELIVDDASDVTSFY. 3 disulfides stabilise this stretch: C172-C196, C186-C247, and C238-C251. Residues 234–239 form an involved in neuraminidase activity region; it reads NRKSCS. 2 N-linked (GlcNAc...) asparagine; by host glycosylation sites follow: N341 and N433. 2 disulfide bridges follow: C344–C461 and C455–C465. N481, N538, and N600 each carry an N-linked (GlcNAc...) asparagine; by host glycan. A disulfide bond links C531 and C542.

This sequence belongs to the paramyxoviruses hemagglutinin-neuraminidase family. In terms of assembly, homotetramer; composed of disulfide-linked homodimers. Interacts with F protein trimer. Interacts with host CG-1B; this interaction inhibits viral adsorption and replication rather than internalization.

It localises to the virion membrane. The protein resides in the host cell membrane. It carries out the reaction Hydrolysis of alpha-(2-&gt;3)-, alpha-(2-&gt;6)-, alpha-(2-&gt;8)- glycosidic linkages of terminal sialic acid residues in oligosaccharides, glycoproteins, glycolipids, colominic acid and synthetic substrates.. Mediates the viral entry into the host cell together with fusion/F protein. Attaches the virus to sialic acid-containing cell receptors and thereby initiates infection. Binding of HN protein to the receptor induces a conformational change that allows the F protein to trigger virion/cell membranes fusion. Its function is as follows. Neuraminidase activity ensures the efficient spread of the virus by dissociating the mature virions from the neuraminic acid containing glycoproteins. In Gallus gallus (Chicken), this protein is Hemagglutinin-neuraminidase (HN).